Here is a 382-residue protein sequence, read N- to C-terminus: MDRMCEERAAEDGSDEEDPDATEAPARIRDTPEDIVLEAPASGLAFHPARDLLAAGDVDGDVFVFSYSCQEGETKELWSSGHHLKSCRAVVFSEDGQKLVTVSKDKAIHFLDVELGRLERRISKAHGAPINSLLLVDENVLATGDDTGGIRLWDQRKEGPLMDMRQHEEYIADMALDPDKKLLLTASGDGCLGVFNIKRRRFELLSEPQSGDLTSVTLMKYGRKVACGSSEGTIYLFNWDGFGATSDRFALRAESIDCMVPVTESLLCAGSTDGVIRAVNILPNRVVGSVGQHAEEPVENLALSHCGCFLASSGHDQRLKFWDMAQLRALVVDDYRRRKKKGGPLRALSSKAWSTDDFFAGLREEGEDAKTLEEEESEDDSD.

Residues 1-11 are compositionally biased toward basic and acidic residues; that stretch reads MDRMCEERAAE. The tract at residues 1-31 is disordered; it reads MDRMCEERAAEDGSDEEDPDATEAPARIRDT. The span at 12–21 shows a compositional bias: acidic residues; the sequence is DGSDEEDPDA. Ser-14 bears the Phosphoserine mark. 7 WD repeats span residues 36–75, 82–121, 125–163, 166–205, 208–247, 250–289, and 293–332; these read VLEA…GETK, HHLK…LERR, AHGA…PLMD, QHEE…FELL, PQSG…ATSD, ALRA…VVGS, and HAEE…ALVV. Phosphoserine occurs at positions 354 and 381.

Belongs to the WD repeat WDR55 family.

It localises to the nucleus. The protein resides in the nucleolus. The protein localises to the cytoplasm. In terms of biological role, nucleolar protein that acts as a modulator of rRNA synthesis. Plays a central role during organogenesis. This Bos taurus (Bovine) protein is WD repeat-containing protein 55 (WDR55).